The sequence spans 411 residues: Serine hydroxymethyltransferase (411 aa).

(6S)-5,6,7,8-tetrahydrofolate is bound by residues L117 and 121–123 (GHL). The residue at position 226 (K226) is an N6-(pyridoxal phosphate)lysine.

It belongs to the SHMT family. Homodimer. Pyridoxal 5'-phosphate serves as cofactor.

The protein resides in the cytoplasm. It catalyses the reaction (6R)-5,10-methylene-5,6,7,8-tetrahydrofolate + glycine + H2O = (6S)-5,6,7,8-tetrahydrofolate + L-serine. It functions in the pathway one-carbon metabolism; tetrahydrofolate interconversion. Its pathway is amino-acid biosynthesis; glycine biosynthesis; glycine from L-serine: step 1/1. Its function is as follows. Catalyzes the reversible interconversion of serine and glycine with tetrahydrofolate (THF) serving as the one-carbon carrier. This reaction serves as the major source of one-carbon groups required for the biosynthesis of purines, thymidylate, methionine, and other important biomolecules. Also exhibits THF-independent aldolase activity toward beta-hydroxyamino acids, producing glycine and aldehydes, via a retro-aldol mechanism. The sequence is that of Serine hydroxymethyltransferase from Syntrophobacter fumaroxidans (strain DSM 10017 / MPOB).